The following is a 346-amino-acid chain: NADP-dependent alcohol dehydrogenase C (346 aa).

Cysteine 41, histidine 63, cysteine 94, cysteine 97, cysteine 100, cysteine 108, and cysteine 158 together coordinate Zn(2+).

The protein belongs to the zinc-containing alcohol dehydrogenase family. It depends on Zn(2+) as a cofactor.

It catalyses the reaction a primary alcohol + NADP(+) = an aldehyde + NADPH + H(+). This is NADP-dependent alcohol dehydrogenase C (adhC) from Mycobacterium bovis (strain ATCC BAA-935 / AF2122/97).